Here is a 322-residue protein sequence, read N- to C-terminus: 4-diphosphocytidyl-2-C-methyl-D-erythritol kinase (322 aa).

Lys-18 is a catalytic residue. 130–140 (PMGAGLGGGSS) serves as a coordination point for ATP. Asp-172 is a catalytic residue.

It belongs to the GHMP kinase family. IspE subfamily.

The catalysed reaction is 4-CDP-2-C-methyl-D-erythritol + ATP = 4-CDP-2-C-methyl-D-erythritol 2-phosphate + ADP + H(+). The protein operates within isoprenoid biosynthesis; isopentenyl diphosphate biosynthesis via DXP pathway; isopentenyl diphosphate from 1-deoxy-D-xylulose 5-phosphate: step 3/6. Its function is as follows. Catalyzes the phosphorylation of the position 2 hydroxy group of 4-diphosphocytidyl-2C-methyl-D-erythritol. In Psychrobacter cryohalolentis (strain ATCC BAA-1226 / DSM 17306 / VKM B-2378 / K5), this protein is 4-diphosphocytidyl-2-C-methyl-D-erythritol kinase.